Consider the following 1257-residue polypeptide: Receptor tyrosine-protein kinase erbB-2 (1257 aa).

Positions 1–22 are cleaved as a signal peptide; sequence MELAAWCRWGFLLALLPPGIAG. Residues 23–654 are Extracellular-facing; it reads TQVCTGTDMK…PAEQRASPVT (632 aa). A disulfide bridge links Cys-26 with Cys-53. Asn-68 and Asn-188 each carry an N-linked (GlcNAc...) asparagine glycan. Disulfide bonds link Cys-163/Cys-193, Cys-196/Cys-205, Cys-200/Cys-213, Cys-221/Cys-228, Cys-225/Cys-236, Cys-237/Cys-245, Cys-241/Cys-253, Cys-256/Cys-265, Cys-269/Cys-296, Cys-300/Cys-312, Cys-316/Cys-332, Cys-335/Cys-339, Cys-343/Cys-368, Cys-476/Cys-506, Cys-513/Cys-522, and Cys-517/Cys-530. N-linked (GlcNAc...) asparagine glycosylation occurs at Asn-260. Asn-532 is a glycosylation site (N-linked (GlcNAc...) asparagine). 8 cysteine pairs are disulfide-bonded: Cys-533–Cys-542, Cys-546–Cys-562, Cys-565–Cys-578, Cys-569–Cys-586, Cys-589–Cys-598, Cys-602–Cys-625, Cys-628–Cys-636, and Cys-632–Cys-644. Asn-573 carries an N-linked (GlcNAc...) asparagine glycan. N-linked (GlcNAc...) asparagine glycosylation is present at Asn-631. The helical transmembrane segment at 655–677 threads the bilayer; that stretch reads FIIATVVGVLLFLILVVVVGILI. A required for interaction with KPNB1 and EEA1 region spans residues 678–691; that stretch reads KRRRQKIRKYTMRR. A Nuclear localization signal motif is present at residues 678–691; that stretch reads KRRRQKIRKYTMRR. Topologically, residues 678-1257 are cytoplasmic; the sequence is KRRRQKIRKY…PEYLGLDVPV (580 aa). The Protein kinase domain occupies 722–989; the sequence is LRKVKVLGSG…RMARDPQRFV (268 aa). ATP contacts are provided by residues 728–736 and Lys-755; that span reads LGSGAFGTV. Asp-847 functions as the Proton acceptor in the catalytic mechanism. The residue at position 879 (Tyr-879) is a Phosphotyrosine. Positions 1029–1181 are disordered; that stretch reads QQGFFSPDPT…PKTLSPGKNG (153 aa). Residues Ser-1056, Ser-1080, Ser-1085, and Ser-1109 each carry the phosphoserine modification. At Tyr-1114 the chain carries Phosphotyrosine. The residue at position 1141 (Tyr-1141) is a Phosphotyrosine; by autocatalysis. Residues 1149-1163 are compositionally biased toward pro residues; the sequence is PQPPLTPEGPLPPVR. Position 1168 is a phosphothreonine (Thr-1168). The interval 1197–1199 is interaction with PIK3C2B; sequence EYL. Tyr-1198 carries the post-translational modification Phosphotyrosine. Positions 1200–1257 are disordered; sequence VPREGTASPPHPSPAFSPAFDNLYYWDQNSSEQGPPPSNFEGTPTAENPEYLGLDVPV. Tyr-1250 is subject to Phosphotyrosine; by autocatalysis.

The protein belongs to the protein kinase superfamily. Tyr protein kinase family. EGF receptor subfamily. Homodimer. Heterodimer with EGFR, ERBB3 and ERBB4. Part of a complex with EGFR and either PIK3C2A or PIK3C2B. May interact with PIK3C2B when phosphorylated on Tyr-1198. Interacts with PRKCABP and PLXNB1. Interacts (when phosphorylated on Tyr-1250) with MEMO1. Interacts with MUC1. Interacts (when phosphorylated on Tyr-1141) with GRB7 (via SH2 domain). Interacts (when phosphorylated on Tyr-1250) with ERBIN Interacts with SRC, KPNB1, RANBP2, EEA1, CRM1, CLTC, PTK6, RPA194, MYOC and ACTB. Interacts with HSP90AA1 and HSP90AB1; the interaction suppresses ERBB2 kinase activity. Interacts with SORL1; this interaction regulates ERBB2 subcellular distribution by promoting its recycling after internalization from endosomes back to the plasma membrane, hence stimulates ERBB2-mediated signaling. Interacts with SH3BGRL. Interacts with ROR1. Post-translationally, autophosphorylated. Autophosphorylation occurs in trans, i.e. one subunit of the dimeric receptor phosphorylates tyrosine residues on the other subunit. Ligand-binding increases phosphorylation on tyrosine residues. Signaling via SEMA4C promotes phosphorylation at Tyr-1250. Dephosphorylated by PTPN12.

Its subcellular location is the cell membrane. It localises to the cell projection. It is found in the ruffle membrane. The protein resides in the early endosome. The protein localises to the cytoplasm. Its subcellular location is the perinuclear region. It localises to the nucleus. The catalysed reaction is L-tyrosyl-[protein] + ATP = O-phospho-L-tyrosyl-[protein] + ADP + H(+). Its function is as follows. Protein tyrosine kinase that is part of several cell surface receptor complexes, but that apparently needs a coreceptor for ligand binding. Essential component of a neuregulin-receptor complex, although neuregulins do not interact with it alone. GP30 is a potential ligand for this receptor. Regulates outgrowth and stabilization of peripheral microtubules (MTs). Upon ERBB2 activation, the MEMO1-RHOA-DIAPH1 signaling pathway elicits the phosphorylation and thus the inhibition of GSK3B at cell membrane. This prevents the phosphorylation of APC and CLASP2, allowing its association with the cell membrane. In turn, membrane-bound APC allows the localization of MACF1 to the cell membrane, which is required for microtubule capture and stabilization. Interacts (preferentially with the tyrosine phosphorylated form) with CPNE3; this interaction occurs at the cell membrane and is increased in a growth factor heregulin-dependent manner. Functionally, in the nucleus is involved in transcriptional regulation. Associates with the 5'-TCAAATTC-3' sequence in the PTGS2/COX-2 promoter and activates its transcription. Implicated in transcriptional activation of CDKN1A; the function involves STAT3 and SRC. Involved in the transcription of rRNA genes by RNA Pol I and enhances protein synthesis and cell growth. This Rattus norvegicus (Rat) protein is Receptor tyrosine-protein kinase erbB-2 (Erbb2).